A 457-amino-acid chain; its full sequence is MDKLDLVNDGLDIIDFIQKNQKEIQKTYGRSSIQQPSTKDRTRAWEDFLQSTSGEHEQAEGGMPKNDGGTEGRNVEDLSSVTSSDGTIGQRVSNTRAWAEDPDDIQLDPMVTDVVYHDHGGECTGHGPSSSPERGWSYHMSGTHDGNVRAVPDTKVLPNAPKTTVPEEVREIDLIGLEDKFASAGLNPAAVPFVPKNQSTPTEEPPVIPEYYYGSGRRGDLSKSPPRGNVNLDSIKIYTSDDEDENQLEYEDEFAKSSSEVVIDTTPEDNDSINQEEVVGDPSDQGLEHPFPLGKFPEKEETPDVRRKDSLMQDSCKRGGVPKRLPMLSEEFECSGSDDPIIQELEREGSHPGGSLRLREPPQSSGNSRNQPDRQLKTGDAASPGGVQRPGTPMPKSRIMPIKKGHRREVSICWDGRRAWVEEWCNPVCSRITPQPRKQECYCGECPTECSQCCHEE.

2 disordered regions span residues 26–104 (KTYG…DPDD) and 193–403 (FVPK…MPIK). 2 stretches are compositionally biased toward polar residues: residues 28-37 (YGRSSIQQPS) and 77-96 (DLSS…SNTR). The span at 240 to 252 (SDDEDENQLEYED) shows a compositional bias: acidic residues. S257 carries the phosphoserine; by host modification. The segment covering 296–317 (FPEKEETPDVRRKDSLMQDSCK) has biased composition (basic and acidic residues). S350 is subject to Phosphoserine; by host. H406, C425, C429, C441, C443, C446, C450, and C453 together coordinate Zn(2+).

This sequence belongs to the paramyxoviruses V protein family. In terms of assembly, interacts with host IFIH1/MDA5, DHX58/LGP2, STAT1 and STAT2.

The protein localises to the host cytoplasm. Its function is as follows. Plays an essential role in the inhibition of host immune response. Prevents the establishment of cellular antiviral state by blocking interferon-alpha/beta (IFN-alpha/beta) production and signaling pathway. Interacts with host IFIH1/MDA5 and DHX58/LGP2 to inhibit the transduction pathway involved in the activation of IFN-beta promoter, thus protecting the virus against cell antiviral state. Blocks the type I interferon signaling pathway by interacting with host STAT1 and STAT2 and thereby inhibiting their phosphorylation and subsequent nuclear translocation. Efficiently blocks the type II interferon signaling pathway. This Hendra virus (isolate Horse/Autralia/Hendra/1994) protein is Non-structural protein V (P/V/C).